The sequence spans 512 residues: Putative ankyrin repeat protein FPV233 (512 aa).

ANK repeat units follow at residues 45–73 (IPFIPLHQAIEARNIDIIKSIITVDNVNQ), 77–106 (DDTYPIHIICKEPNMLAISYMLRSINQCSV), 136–168 (IQDIDLKYIDKKSKDDIIEITKLLFSYGADINM), 172–201 (HGNSPLHYATENPDQRLTRLLLSKGANPNI), 205–236 (TNKSPLYYSIESDNPDITMLLIDKFIFNNTDP), 238–262 (LSHAIKHYRKPILHALIENGASINA), 266–296 (YGNTPLHYAVSYCKDIDVIKLLLERGVDVNA), and 301–329 (RNLTPLHSSYLKSPRVLKLLLQYGADINS).

This Vertebrata (FPV) protein is Putative ankyrin repeat protein FPV233.